Here is a 99-residue protein sequence, read N- to C-terminus: Prostate and testis expressed protein 14 (99 aa).

Positions 1-21 (MEKYLLLLLLGIFLRVGFLQA) are cleaved as a signal peptide. Residues 22-99 (LTCVSCGRLN…CDHQNLCNKP (78 aa)) enclose the UPAR/Ly6 domain. 5 disulfides stabilise this stretch: Cys24–Cys51, Cys27–Cys36, Cys43–Cys69, Cys73–Cys89, and Cys90–Cys96. Asn31 carries N-linked (GlcNAc...) asparagine glycosylation. Asn75 carries an N-linked (GlcNAc...) asparagine glycan.

This sequence belongs to the PATE family. Monomer. Post-translationally, glycosylated. In terms of tissue distribution, predominantly expressed in the seminal vesicles. Expressed in prostate, and to a lesser extent in the cauda epididymis.

The protein localises to the secreted. This chain is Prostate and testis expressed protein 14, found in Mus musculus (Mouse).